Reading from the N-terminus, the 421-residue chain is Probable dual-specificity RNA methyltransferase RlmN (421 aa).

Residues 1–23 (MTATTAESGRPDQPPTAEAGRPV) are disordered. The active-site Proton acceptor is the Glu127. The region spanning 133 to 372 (YPDRATVCVS…VTTVRDTRGR (240 aa)) is the Radical SAM core domain. Cys140 and Cys378 are oxidised to a cystine. Residues Cys147, Cys151, and Cys154 each contribute to the [4Fe-4S] cluster site. Residues 202–203 (GE), Ser236, 259–261 (SLH), and Asn335 each bind S-adenosyl-L-methionine. The active-site S-methylcysteine intermediate is Cys378. Positions 383–421 (AEPAGKPERTDRPEQVGSDRLVEFGAVGSTTPDGDRVLR) are disordered. A compositionally biased stretch (basic and acidic residues) spans 387 to 396 (GKPERTDRPE).

Belongs to the radical SAM superfamily. RlmN family. The cofactor is [4Fe-4S] cluster.

The protein resides in the cytoplasm. It carries out the reaction adenosine(2503) in 23S rRNA + 2 reduced [2Fe-2S]-[ferredoxin] + 2 S-adenosyl-L-methionine = 2-methyladenosine(2503) in 23S rRNA + 5'-deoxyadenosine + L-methionine + 2 oxidized [2Fe-2S]-[ferredoxin] + S-adenosyl-L-homocysteine. The enzyme catalyses adenosine(37) in tRNA + 2 reduced [2Fe-2S]-[ferredoxin] + 2 S-adenosyl-L-methionine = 2-methyladenosine(37) in tRNA + 5'-deoxyadenosine + L-methionine + 2 oxidized [2Fe-2S]-[ferredoxin] + S-adenosyl-L-homocysteine. Its function is as follows. Specifically methylates position 2 of adenine 2503 in 23S rRNA and position 2 of adenine 37 in tRNAs. The sequence is that of Probable dual-specificity RNA methyltransferase RlmN from Frankia casuarinae (strain DSM 45818 / CECT 9043 / HFP020203 / CcI3).